The sequence spans 487 residues: Malonate-semialdehyde dehydrogenase 2 (487 aa).

The NAD(+) site is built by phenylalanine 154, lysine 178, glutamate 181, arginine 182, and serine 231. The active-site Nucleophile is the cysteine 286. Glutamate 386 provides a ligand contact to NAD(+).

Belongs to the aldehyde dehydrogenase family. IolA subfamily. As to quaternary structure, homotetramer.

It carries out the reaction 3-oxopropanoate + NAD(+) + CoA + H2O = hydrogencarbonate + acetyl-CoA + NADH + H(+). The enzyme catalyses 2-methyl-3-oxopropanoate + NAD(+) + CoA + H2O = propanoyl-CoA + hydrogencarbonate + NADH + H(+). It functions in the pathway polyol metabolism; myo-inositol degradation into acetyl-CoA; acetyl-CoA from myo-inositol: step 7/7. In terms of biological role, catalyzes the oxidation of malonate semialdehyde (MSA) and methylmalonate semialdehyde (MMSA) into acetyl-CoA and propanoyl-CoA, respectively. Is involved in a myo-inositol catabolic pathway. Bicarbonate, and not CO2, is the end-product of the enzymatic reaction. This chain is Malonate-semialdehyde dehydrogenase 2, found in Bacillus anthracis.